A 514-amino-acid polypeptide reads, in one-letter code: 2,3-bisphosphoglycerate-independent phosphoglycerate mutase (514 aa).

Residues Asp-14 and Ser-64 each coordinate Mn(2+). Ser-64 serves as the catalytic Phosphoserine intermediate. Substrate is bound by residues His-125, 155–156 (RD), Arg-187, Arg-193, 263–266 (RADR), and Lys-336. 5 residues coordinate Mn(2+): Asp-403, His-407, Asp-444, His-445, and His-463.

The protein belongs to the BPG-independent phosphoglycerate mutase family. As to quaternary structure, monomer. The cofactor is Mn(2+).

The catalysed reaction is (2R)-2-phosphoglycerate = (2R)-3-phosphoglycerate. The protein operates within carbohydrate degradation; glycolysis; pyruvate from D-glyceraldehyde 3-phosphate: step 3/5. Its function is as follows. Catalyzes the interconversion of 2-phosphoglycerate and 3-phosphoglycerate. The chain is 2,3-bisphosphoglycerate-independent phosphoglycerate mutase from Shigella flexneri.